We begin with the raw amino-acid sequence, 471 residues long: Glutamate--tRNA ligase (471 aa).

Residues 9 to 19 (PSPTGYLHVGG) carry the 'HIGH' region motif. Zn(2+)-binding residues include cysteine 98, cysteine 100, cysteine 125, and histidine 127. Residues 237–241 (KLSKR) carry the 'KMSKS' region motif. Residue lysine 240 coordinates ATP.

This sequence belongs to the class-I aminoacyl-tRNA synthetase family. Glutamate--tRNA ligase type 1 subfamily. In terms of assembly, monomer. The cofactor is Zn(2+).

The protein localises to the cytoplasm. The enzyme catalyses tRNA(Glu) + L-glutamate + ATP = L-glutamyl-tRNA(Glu) + AMP + diphosphate. Functionally, catalyzes the attachment of glutamate to tRNA(Glu) in a two-step reaction: glutamate is first activated by ATP to form Glu-AMP and then transferred to the acceptor end of tRNA(Glu). The protein is Glutamate--tRNA ligase of Salmonella enteritidis PT4 (strain P125109).